We begin with the raw amino-acid sequence, 355 residues long: UDP-N-acetylglucosamine--N-acetylmuramyl-(pentapeptide) pyrophosphoryl-undecaprenol N-acetylglucosamine transferase (355 aa).

UDP-N-acetyl-alpha-D-glucosamine is bound by residues 14-16 (TGG), Asn126, Arg162, Ser190, Ile243, 262-267 (ALTVSE), and Gln287.

The protein belongs to the glycosyltransferase 28 family. MurG subfamily.

It localises to the cell inner membrane. The enzyme catalyses di-trans,octa-cis-undecaprenyl diphospho-N-acetyl-alpha-D-muramoyl-L-alanyl-D-glutamyl-meso-2,6-diaminopimeloyl-D-alanyl-D-alanine + UDP-N-acetyl-alpha-D-glucosamine = di-trans,octa-cis-undecaprenyl diphospho-[N-acetyl-alpha-D-glucosaminyl-(1-&gt;4)]-N-acetyl-alpha-D-muramoyl-L-alanyl-D-glutamyl-meso-2,6-diaminopimeloyl-D-alanyl-D-alanine + UDP + H(+). It participates in cell wall biogenesis; peptidoglycan biosynthesis. Its function is as follows. Cell wall formation. Catalyzes the transfer of a GlcNAc subunit on undecaprenyl-pyrophosphoryl-MurNAc-pentapeptide (lipid intermediate I) to form undecaprenyl-pyrophosphoryl-MurNAc-(pentapeptide)GlcNAc (lipid intermediate II). This Vibrio parahaemolyticus serotype O3:K6 (strain RIMD 2210633) protein is UDP-N-acetylglucosamine--N-acetylmuramyl-(pentapeptide) pyrophosphoryl-undecaprenol N-acetylglucosamine transferase.